The chain runs to 150 residues: Urease accessory protein UreE (150 aa).

This sequence belongs to the UreE family.

The protein localises to the cytoplasm. Its function is as follows. Involved in urease metallocenter assembly. Binds nickel. Probably functions as a nickel donor during metallocenter assembly. This is Urease accessory protein UreE from Staphylococcus epidermidis (strain ATCC 35984 / DSM 28319 / BCRC 17069 / CCUG 31568 / BM 3577 / RP62A).